Reading from the N-terminus, the 341-residue chain is L-threonine 3-dehydrogenase (341 aa).

Cysteine 38 is a binding site for Zn(2+). Residues threonine 40 and histidine 43 each act as charge relay system in the active site. Positions 63, 64, 93, 96, 99, and 107 each coordinate Zn(2+). NAD(+) contacts are provided by residues isoleucine 175, aspartate 195, arginine 200, leucine 262–isoleucine 264, and isoleucine 286–tyrosine 287.

This sequence belongs to the zinc-containing alcohol dehydrogenase family. Homotetramer. Requires Zn(2+) as cofactor.

It is found in the cytoplasm. It catalyses the reaction L-threonine + NAD(+) = (2S)-2-amino-3-oxobutanoate + NADH + H(+). The protein operates within amino-acid degradation; L-threonine degradation via oxydo-reductase pathway; glycine from L-threonine: step 1/2. Its function is as follows. Catalyzes the NAD(+)-dependent oxidation of L-threonine to 2-amino-3-ketobutyrate. This chain is L-threonine 3-dehydrogenase, found in Escherichia coli (strain K12 / MC4100 / BW2952).